Here is a 299-residue protein sequence, read N- to C-terminus: Glycine--tRNA ligase alpha subunit (299 aa).

It belongs to the class-II aminoacyl-tRNA synthetase family. As to quaternary structure, tetramer of two alpha and two beta subunits.

The protein localises to the cytoplasm. The enzyme catalyses tRNA(Gly) + glycine + ATP = glycyl-tRNA(Gly) + AMP + diphosphate. This is Glycine--tRNA ligase alpha subunit (glyQ) from Synechocystis sp. (strain ATCC 27184 / PCC 6803 / Kazusa).